The chain runs to 249 residues: Superoxide dismutase 1 copper chaperone (249 aa).

Residues 6–69 (TYEATYAIPM…TLRNCGKDAI (64 aa)) enclose the HMA domain. His16 contributes to the Zn(2+) binding site. 2 residues coordinate Cu cation: Cys17 and Cys20. Cys27 and Cys64 are joined by a disulfide. 2 residues coordinate Cu cation: Cys229 and Cys231.

This sequence belongs to the CCS1 family. As to quaternary structure, homodimer, and heterodimer with apo-SOD1. Zinc-binding at His-16 of CCS1 and 'Glu-43' of apo-SOD1 is required for this heterodimerization. The cofactor is Cu(2+).

It localises to the cytoplasm. The protein localises to the mitochondrion intermembrane space. Its function is as follows. Copper chaperone for apo superoxide dismutase 1 (SOD1). Binds copper ions and delivers them specifically to apo-SOD1. The chain is Superoxide dismutase 1 copper chaperone (CCS1) from Saccharomyces cerevisiae (strain ATCC 204508 / S288c) (Baker's yeast).